Here is a 142-residue protein sequence, read N- to C-terminus: Large ribosomal subunit protein uL13 (142 aa).

The protein belongs to the universal ribosomal protein uL13 family. As to quaternary structure, part of the 50S ribosomal subunit.

Functionally, this protein is one of the early assembly proteins of the 50S ribosomal subunit, although it is not seen to bind rRNA by itself. It is important during the early stages of 50S assembly. The polypeptide is Large ribosomal subunit protein uL13 (Shigella dysenteriae serotype 1 (strain Sd197)).